The following is a 122-amino-acid chain: Large ribosomal subunit protein uL14 (122 aa).

The protein belongs to the universal ribosomal protein uL14 family. As to quaternary structure, part of the 50S ribosomal subunit. Forms a cluster with proteins L3 and L19. In the 70S ribosome, L14 and L19 interact and together make contacts with the 16S rRNA in bridges B5 and B8.

Binds to 23S rRNA. Forms part of two intersubunit bridges in the 70S ribosome. In Cupriavidus taiwanensis (strain DSM 17343 / BCRC 17206 / CCUG 44338 / CIP 107171 / LMG 19424 / R1) (Ralstonia taiwanensis (strain LMG 19424)), this protein is Large ribosomal subunit protein uL14.